Here is a 171-residue protein sequence, read N- to C-terminus: Translation initiation factor IF-3 (171 aa).

Belongs to the IF-3 family. In terms of assembly, monomer.

The protein localises to the cytoplasm. Its function is as follows. IF-3 binds to the 30S ribosomal subunit and shifts the equilibrium between 70S ribosomes and their 50S and 30S subunits in favor of the free subunits, thus enhancing the availability of 30S subunits on which protein synthesis initiation begins. The chain is Translation initiation factor IF-3 from Thermus thermophilus (strain ATCC BAA-163 / DSM 7039 / HB27).